We begin with the raw amino-acid sequence, 430 residues long: Tol-Pal system protein TolB (430 aa).

Positions 1 to 26 are cleaved as a signal peptide; that stretch reads MSLMTKLGLRALVASCLIAAGGAAHA.

The protein belongs to the TolB family. As to quaternary structure, the Tol-Pal system is composed of five core proteins: the inner membrane proteins TolA, TolQ and TolR, the periplasmic protein TolB and the outer membrane protein Pal. They form a network linking the inner and outer membranes and the peptidoglycan layer.

Its subcellular location is the periplasm. Its function is as follows. Part of the Tol-Pal system, which plays a role in outer membrane invagination during cell division and is important for maintaining outer membrane integrity. This chain is Tol-Pal system protein TolB, found in Paraburkholderia phymatum (strain DSM 17167 / CIP 108236 / LMG 21445 / STM815) (Burkholderia phymatum).